We begin with the raw amino-acid sequence, 1404 residues long: DNA-directed RNA polymerase subunit beta' (1404 aa).

The Zn(2+) site is built by C70, C72, C85, and C88. The Mg(2+) site is built by D460, D462, and D464. Residues C814, C889, C896, and C899 each contribute to the Zn(2+) site.

It belongs to the RNA polymerase beta' chain family. As to quaternary structure, the RNAP catalytic core consists of 2 alpha, 1 beta, 1 beta' and 1 omega subunit. When a sigma factor is associated with the core the holoenzyme is formed, which can initiate transcription. Mg(2+) is required as a cofactor. Requires Zn(2+) as cofactor.

It carries out the reaction RNA(n) + a ribonucleoside 5'-triphosphate = RNA(n+1) + diphosphate. Functionally, DNA-dependent RNA polymerase catalyzes the transcription of DNA into RNA using the four ribonucleoside triphosphates as substrates. In Xanthomonas axonopodis pv. citri (strain 306), this protein is DNA-directed RNA polymerase subunit beta'.